The following is a 187-amino-acid chain: Elongation factor P (187 aa).

The protein belongs to the elongation factor P family.

The protein localises to the cytoplasm. It participates in protein biosynthesis; polypeptide chain elongation. Its function is as follows. Involved in peptide bond synthesis. Stimulates efficient translation and peptide-bond synthesis on native or reconstituted 70S ribosomes in vitro. Probably functions indirectly by altering the affinity of the ribosome for aminoacyl-tRNA, thus increasing their reactivity as acceptors for peptidyl transferase. This Roseobacter denitrificans (strain ATCC 33942 / OCh 114) (Erythrobacter sp. (strain OCh 114)) protein is Elongation factor P.